Here is a 383-residue protein sequence, read N- to C-terminus: 23S rRNA (uracil(747)-C(5))-methyltransferase RlmC (383 aa).

The [4Fe-4S] cluster site is built by C3, C11, C14, and C89. Positions 214, 243, 270, and 315 each coordinate S-adenosyl-L-methionine. C342 acts as the Nucleophile in catalysis.

Belongs to the class I-like SAM-binding methyltransferase superfamily. RNA M5U methyltransferase family. RlmC subfamily.

The enzyme catalyses uridine(747) in 23S rRNA + S-adenosyl-L-methionine = 5-methyluridine(747) in 23S rRNA + S-adenosyl-L-homocysteine + H(+). In terms of biological role, catalyzes the formation of 5-methyl-uridine at position 747 (m5U747) in 23S rRNA. The sequence is that of 23S rRNA (uracil(747)-C(5))-methyltransferase RlmC from Actinobacillus succinogenes (strain ATCC 55618 / DSM 22257 / CCUG 43843 / 130Z).